Consider the following 211-residue polypeptide: Outer-membrane lipoprotein carrier protein (211 aa).

Residues 1 to 25 (MRAIRMLLVSALTLGSLSATLSAHA) form the signal peptide.

This sequence belongs to the LolA family. Monomer.

It is found in the periplasm. In terms of biological role, participates in the translocation of lipoproteins from the inner membrane to the outer membrane. Only forms a complex with a lipoprotein if the residue after the N-terminal Cys is not an aspartate (The Asp acts as a targeting signal to indicate that the lipoprotein should stay in the inner membrane). This chain is Outer-membrane lipoprotein carrier protein, found in Pseudomonas putida (strain W619).